Reading from the N-terminus, the 291-residue chain is Lys-63-specific deubiquitinase BRCC36 (291 aa).

Ala2 is modified (N-acetylalanine). Residues 12-179 (VHLESDAFLV…YTCFQSIQAQ (168 aa)) enclose the MPN domain. Residues His122, His124, and Asp135 each coordinate Zn(2+). A JAMM motif motif is present at residues 122–135 (HSHPHITVWPSHVD). Phosphoserine is present on Ser233.

The protein belongs to the peptidase M67A family. BRCC36 subfamily. As to quaternary structure, component of the ARISC complex, at least composed of UIMC1/RAP80, ABRAXAS1, BRCC3/BRCC36, BABAM2 and BABAM1/NBA1. Component of the BRCA1-A complex, at least composed of BRCA1, BARD1, UIMC1/RAP80, ABRAXAS1, BRCC3/BRCC36, BABAM2 and BABAM1/NBA1. In the BRCA1-A complex, interacts directly with ABRAXAS1 and BABAM2. Component of the BRISC complex, at least composed of ABRAXAS2, BRCC3/BRCC36, BABAM2 and BABAM1/NBA1. Identified in a complex with SHMT2 and the other subunits of the BRISC complex. In the BRISC complex, interacts directly with ABRAXAS2. Identified in a complex with ABRAXAS2 and NUMA1. The BRISC complex interacts with the CSN complex. Component of the BRCA1/BRCA2 containing complex (BRCC), which also contains BRCA1, BRCA2, BARD1, BABAM2 and RAD51. BRCC is a ubiquitin E3 ligase complex that enhances cellular survival following DNA damage. Interacts with BRCA1. Binds polyubiquitin. Interacts with PWWP2B. Interacts with HDAC1; this interaction is enhanced in the presence of PWWP2B. The cofactor is Zn(2+).

The protein resides in the nucleus. Its subcellular location is the cytoplasm. The protein localises to the cytoskeleton. It localises to the spindle pole. In terms of biological role, metalloprotease that specifically cleaves 'Lys-63'-linked polyubiquitin chains. Does not have activity toward 'Lys-48'-linked polyubiquitin chains. Component of the BRCA1-A complex, a complex that specifically recognizes 'Lys-63'-linked ubiquitinated histones H2A and H2AX at DNA lesions sites, leading to target the BRCA1-BARD1 heterodimer to sites of DNA damage at double-strand breaks (DSBs). In the BRCA1-A complex, it specifically removes 'Lys-63'-linked ubiquitin on histones H2A and H2AX, antagonizing the RNF8-dependent ubiquitination at double-strand breaks (DSBs). Catalytic subunit of the BRISC complex, a multiprotein complex that specifically cleaves 'Lys-63'-linked ubiquitin in various substrates. Mediates the specific 'Lys-63'-specific deubiquitination associated with the COP9 signalosome complex (CSN), via the interaction of the BRISC complex with the CSN complex. The BRISC complex is required for normal mitotic spindle assembly and microtubule attachment to kinetochores via its role in deubiquitinating NUMA1. Plays a role in interferon signaling via its role in the deubiquitination of the interferon receptor IFNAR1; deubiquitination increases IFNAR1 activity by enhancing its stability and cell surface expression. Acts as a regulator of the NLRP3 inflammasome by mediating deubiquitination of NLRP3, leading to NLRP3 inflammasome assembly. Down-regulates the response to bacterial lipopolysaccharide (LPS) via its role in IFNAR1 deubiquitination. Deubiquitinates HDAC1 and PWWP2B leading to their stabilization. This chain is Lys-63-specific deubiquitinase BRCC36 (Brcc3), found in Mus musculus (Mouse).